We begin with the raw amino-acid sequence, 136 residues long: MTTLNTGSARISIMNGSSVASTSPSVKCKEDQGLNGHEEKENPFAEYMWMENEEDFNRQVEEELQEQDFLDRCFQEMLDEEDQDWFIPARDLPQAVGHLQQQLNGLSVGDSHESEDILSKSNLNPDAKEFVPGVKY.

Residues 15-25 (NGSSVASTSPS) show a composition bias toward polar residues. Disordered stretches follow at residues 15-40 (NGSS…HEEK) and 107-136 (SVGD…GVKY). Residues 27-40 (KCKEDQGLNGHEEK) show a composition bias toward basic and acidic residues.

The protein belongs to the PAIP2 family. As to quaternary structure, interacts (via central acidic portion and C-terminus) with PABPC1 (via the second and third RRM domains and the C-terminus). Ubiquitinated in vitro. In terms of tissue distribution, expressed at very high levels in pancreas, at high levels in testis and at moderately high levels in brain, heart and lung (at protein level).

In terms of biological role, inhibits translation of capped and polyadenylated mRNAs by displacing PABPC1 from the poly(A) tail. This chain is Polyadenylate-binding protein-interacting protein 2B (Paip2b), found in Mus musculus (Mouse).